We begin with the raw amino-acid sequence, 199 residues long: Thymidine kinase (199 aa).

ATP is bound by residues 23–30 and 95–98; these read GSMFSGKT and DEAQ. Glu-96 serves as the catalytic Proton acceptor. Zn(2+) contacts are provided by Cys-152, Cys-155, Cys-184, and Cys-187.

This sequence belongs to the thymidine kinase family. In terms of assembly, homotetramer.

Its subcellular location is the cytoplasm. It carries out the reaction thymidine + ATP = dTMP + ADP + H(+). This is Thymidine kinase from Bacteroides fragilis (strain ATCC 25285 / DSM 2151 / CCUG 4856 / JCM 11019 / LMG 10263 / NCTC 9343 / Onslow / VPI 2553 / EN-2).